Reading from the N-terminus, the 412-residue chain is Elongation factor 1-gamma 2 (412 aa).

N-acetylserine is present on Ser-2. A GST N-terminal domain is found at 2-77 (SQGTLYINRS…YLANQVADEK (76 aa)). The GST C-terminal domain occupies 86 to 217 (DVIEKSQILR…AEKALTYTPP (132 aa)). Residues 216–253 (PPKKQKAEKPKAEKSKAEKKKDEAKPADDAAPAKKPKH) form a disordered region. A compositionally biased stretch (basic and acidic residues) spans 220–247 (QKAEKPKAEKSKAEKKKDEAKPADDAAP). In terms of domain architecture, EF-1-gamma C-terminal spans 251-412 (PKHPLEALGK…KEIVDGKVLK (162 aa)).

The eukaryotic elongation factor 1 complex (eEF1) is probably a heterohexamer. Two trimeric complexes, each composed of eEF1A (TEF1 or TEF2), eEF1Balpha (EFB1) and eEF1Bgamma (CAM1 or TEF4), are probably dimerized via the eF1Bgamma subunits. The eEF1B subcomplex with the GEF activity is formed of eEF1Balpha and eEF1Bgamma. TEF4 interacts with EFB1.

It is found in the cytoplasm. It functions in the pathway protein biosynthesis; polypeptide chain elongation. Subunit of the eukaryotic elongation factor 1 complex (eEF1). Probably plays a role in anchoring the complex to other cellular components. This chain is Elongation factor 1-gamma 2 (TEF4), found in Saccharomyces cerevisiae (strain ATCC 204508 / S288c) (Baker's yeast).